The following is a 300-amino-acid chain: Arginine/serine-rich protein 1 (300 aa).

The tract at residues 1-142 is disordered; it reads MSSAAVSKYV…RGRSHHRRSY (142 aa). Ser17 bears the Phosphoserine mark. Residues 23–36 are compositionally biased toward low complexity; the sequence is SPSTSGSGRSSRLS. Residues 37–104 are compositionally biased toward basic residues; sequence SRSRSRSSSR…RSRSRSRGHR (68 aa). A compositionally biased stretch (basic and acidic residues) spans 105 to 115; it reads YYRDSRYEQPR. The span at 116 to 125 shows a compositional bias: low complexity; that stretch reads RYYQSPSPYR. 2 positions are modified to phosphoserine: Ser120 and Ser122. The segment covering 126–141 has biased composition (basic residues); that stretch reads SRSRSRSRGRSHHRRS. Omega-N-methylarginine is present on Arg147. Positions 222–300 are disordered; it reads QGAVSCSGPK…KSPYGLWIPV (79 aa). Residues 268-277 show a composition bias toward basic and acidic residues; that stretch reads PLEKTTKAAV. Ser284 bears the Phosphoserine mark.

Belongs to the RSRP family. In terms of processing, phosphorylated. Phosphorylation at Ser-120 and Ser-122 mediates the interaction with spliceosome proteins.

The protein resides in the nucleus. In terms of biological role, probably acts as a spliceosomal factor that contributes to spliceosome assembly and regulates the isoform switching of proteins such as PARP6. In Rattus norvegicus (Rat), this protein is Arginine/serine-rich protein 1 (Rsrp1).